Here is a 393-residue protein sequence, read N- to C-terminus: Aspartate aminotransferase (393 aa).

Residues Gly-38, Trp-124, and Asn-174 each contribute to the L-aspartate site. Lys-237 is modified (N6-(pyridoxal phosphate)lysine).

The protein belongs to the class-I pyridoxal-phosphate-dependent aminotransferase family. In terms of assembly, homodimer. The cofactor is pyridoxal 5'-phosphate.

It localises to the cytoplasm. It catalyses the reaction L-aspartate + 2-oxoglutarate = oxaloacetate + L-glutamate. In Bacillus subtilis (strain 168), this protein is Aspartate aminotransferase (aspB).